The sequence spans 597 residues: Nuclear factor erythroid 2-related factor 2 (597 aa).

The DLG motif signature appears at 29 to 31; it reads DLG. Phosphoserine; by PKC is present on serine 40. The short motif at 79–82 is the ETGE motif element; it reads ETGE. At serine 207 the chain carries Phosphoserine. Positions 327–440 are disordered; it reads TMEFNDSDSG…APFTKDKHSS (114 aa). Polar residues predominate over residues 333-345; sequence SDSGISLNTSPSR. 3 N-linked (Glc) (glycation) lysine glycosylation sites follow: lysine 454, lysine 464, and lysine 479. Positions 489-552 constitute a bZIP domain; sequence LIRDIRRRGK…HLLKRRLSTL (64 aa). Arginine 491 carries N-linked (Glc) (glycation) arginine glycosylation. The basic motif stretch occupies residues 491 to 510; it reads RDIRRRGKNKVAAQNCRKRK. The segment at 514–521 is leucine-zipper; sequence IVELEQDL. An N-linked (Glc) (glycation) arginine glycan is attached at arginine 561. Positions 563–597 are disordered; that stretch reads EDGKPYSPSEYSLQQTRDGNVFLVPKSKKPDTKKN. Lysine 566 is a glycosylation site (N-linked (Glc) (glycation) lysine). Polar residues predominate over residues 571–580; that stretch reads SEYSLQQTRD. Residues 583–588 form a mediates interaction with CHD6 and is necessary to activate transcription region; it reads VFLVPK. N6-acetyllysine; by CREBBP is present on residues lysine 588 and lysine 591.

It belongs to the bZIP family. CNC subfamily. As to quaternary structure, heterodimer; heterodimerizes with small Maf proteins. Interacts (via the bZIP domain) with MAFG and MAFK; required for binding to antioxidant response elements (AREs) on DNA. Interacts with KEAP1; the interaction is direct and promotes ubiquitination by the BCR(KEAP1) E3 ubiquitin ligase complex. Forms a ternary complex with PGAM5 and KEAP1. Interacts with EEF1D at heat shock promoter elements (HSE). Interacts via its leucine-zipper domain with the coiled-coil domain of PMF1. Interacts with CHD6; involved in activation of the transcription. Interacts with ESRRB; represses NFE2L2 transcriptional activity. Interacts with MOTS-c, a peptide produced by the mitochondrially encoded 12S rRNA MT-RNR1; the interaction occurs in the nucleus following metabolic stress. Ubiquitinated in the cytoplasm by the BCR(KEAP1) E3 ubiquitin ligase complex leading to its degradation. In response to oxidative stress, electrophile metabolites, such as sulforaphane, modify KEAP1, leading to inhibit activity of the BCR(KEAP1) complex, promoting NFE2L2/NRF2 nuclear accumulation and activity. In response to autophagy, the BCR(KEAP1) complex is inactivated. In terms of processing, phosphorylated by EIF2AK3/PERK following unfolded protein response (UPR), promoting dissociation from its cytoplasmic inhibitor KEAP1, followed by its translocation into the nucleus. Phosphorylation of Ser-40 by PKC in response to oxidative stress dissociates NFE2L2 from its cytoplasmic inhibitor KEAP1, promoting its translocation into the nucleus. Post-translationally, acetylation at Lys-588 and Lys-591 increases nuclear localization whereas deacetylation by SIRT1 enhances cytoplasmic presence. Glycation impairs transcription factor activity by preventing heterodimerization with small Maf proteins. Deglycation by FN3K restores activity. In terms of tissue distribution, widely expressed. Highest expression in liver, skeletal muscle, luminal cells of the stomach and intestine, lining of the bronchi and alveoli, and in renal tubules; followed by heart, spleen, testis and brain.

The protein resides in the cytoplasm. It is found in the cytosol. The protein localises to the nucleus. Functionally, transcription factor that plays a key role in the response to oxidative stress: binds to antioxidant response (ARE) elements present in the promoter region of many cytoprotective genes, such as phase 2 detoxifying enzymes, and promotes their expression, thereby neutralizing reactive electrophiles. In normal conditions, ubiquitinated and degraded in the cytoplasm by the BCR(KEAP1) complex. In response to oxidative stress, electrophile metabolites inhibit activity of the BCR(KEAP1) complex, promoting nuclear accumulation of NFE2L2/NRF2, heterodimerization with one of the small Maf proteins and binding to ARE elements of cytoprotective target genes. The NFE2L2/NRF2 pathway is also activated in response to selective autophagy: autophagy promotes interaction between KEAP1 and SQSTM1/p62 and subsequent inactivation of the BCR(KEAP1) complex, leading to NFE2L2/NRF2 nuclear accumulation and expression of cytoprotective genes. The NFE2L2/NRF2 pathway is also activated during the unfolded protein response (UPR), contributing to redox homeostasis and cell survival following endoplasmic reticulum stress. May also be involved in the transcriptional activation of genes of the beta-globin cluster by mediating enhancer activity of hypersensitive site 2 of the beta-globin locus control region. Also plays an important role in the regulation of the innate immune response. It is a critical regulator of the innate immune response and survival during sepsis by maintaining redox homeostasis and restraint of the dysregulation of pro-inflammatory signaling pathways like MyD88-dependent and -independent and TNF-alpha signaling. Suppresses macrophage inflammatory response by blocking pro-inflammatory cytokine transcription and the induction of IL6. Binds to the proximity of pro-inflammatory genes in macrophages and inhibits RNA Pol II recruitment. The inhibition is independent of the Nrf2-binding motif and reactive oxygen species level. Represses antiviral cytosolic DNA sensing by suppressing the expression of the adapter protein STING1 and decreasing responsiveness to STING1 agonists while increasing susceptibility to infection with DNA viruses. This chain is Nuclear factor erythroid 2-related factor 2, found in Mus musculus (Mouse).